A 226-amino-acid polypeptide reads, in one-letter code: Glutathione peroxidase 3 (226 aa).

The first 24 residues, 1–24, serve as a signal peptide directing secretion; it reads MARLLQASCLLSLLLAGFLPQSRG. Residue selenocysteine 73 is part of the active site. A non-standard amino acid (selenocysteine) is located at residue selenocysteine 73.

It belongs to the glutathione peroxidase family. Homotetramer. As to expression, secreted in plasma.

The protein localises to the secreted. The enzyme catalyses 2 glutathione + H2O2 = glutathione disulfide + 2 H2O. It carries out the reaction tert-butyl hydroperoxide + 2 glutathione = tert-butanol + glutathione disulfide + H2O. Its function is as follows. Protects cells and enzymes from oxidative damage, by catalyzing the reduction of hydrogen peroxide, lipid peroxides and organic hydroperoxide, by glutathione. The chain is Glutathione peroxidase 3 from Sapajus apella (Brown-capped capuchin).